The chain runs to 802 residues: MLVSYNWVKEFFQDFPLTAEELGEAITRTGIEIEGVEELSASLKNVVVGEVLSCERHPDAEKLNKCLVQTDETEPVQIICGAPNVAAGQKVIVAKVGARLPGGLKIKRAKLRGEVSEGMICSLAELGFESKVVPKAYAEGIYVLPAHVETGVSAITLLGLDDAILDMAITPNRADALSMNGVAHEVGAIIHQKPAQPTEPDVSEKGKADDFISVEVENPAETPYYAIKMVENIEIKESPLWLQTKLMKAGIRPHNNVVDVTNYINLLYGQPLHSFDYDKIGSKKIVVRSAKEQEEITTLDGEKRTLQAGHTVITNGVEPIAIAGVMGGEFSEVTENTTTVALEGAIFSSSSIGKASRELYLRTEASIRYDKGSDAWKVEKALAHGGALIAELSGGTLVGGVVEVDNREKAVNKIETSLTRINRILGTAITLAEIETIFDRLGFVLEVKNDALIIEVPTRRWDITIEADILEEVARIYGYDEIPVTLPATSTTGGLSDSQKARRVMRAYLEGAGLNQALTYSLTSKKDATRLALSDEKTVALSMPMSEEHSHLRTSIVPQLIRSASYNIARKNMDVALYEMGTVFYATEGDNLPIEQEHLAGLITGNWHTIDWQKTPKPVDFFVLKGIVEGLVNKLGIKSELHWKQTEKEELHPGRTASLILEGQEIGYLGALHPAVEANYDLKETYVFEINVAALLDATKEKVVYHPIPRYPEMTRDLALLVDKNTDHATISQVIQEHGGKLLVDIELFDIFEGESIGENKKSLAYTLTFLDSERTLVEEDVQKATNKVIEALQEKLHAIIR.

A tRNA-binding domain is found at 40 to 155 (SASLKNVVVG…AHVETGVSAI (116 aa)). A B5 domain is found at 409–484 (KAVNKIETSL…RIYGYDEIPV (76 aa)). Mg(2+) is bound by residues Asp-462, Asp-468, Glu-471, and Glu-472. The region spanning 709–802 (PRYPEMTRDL…LQEKLHAIIR (94 aa)) is the FDX-ACB domain.

The protein belongs to the phenylalanyl-tRNA synthetase beta subunit family. Type 1 subfamily. As to quaternary structure, tetramer of two alpha and two beta subunits. Mg(2+) serves as cofactor.

The protein resides in the cytoplasm. It carries out the reaction tRNA(Phe) + L-phenylalanine + ATP = L-phenylalanyl-tRNA(Phe) + AMP + diphosphate + H(+). The polypeptide is Phenylalanine--tRNA ligase beta subunit (Listeria monocytogenes serotype 4b (strain F2365)).